The following is a 506-amino-acid chain: Tyrosine-protein kinase isoform SRK4 (506 aa).

Composition is skewed to polar residues over residues 1–10 (MGSCCSSQDG) and 18–31 (AGST…SQSV). Residues 1-53 (MGSCCSSQDGDGNGKATAGSTVDSHELSQSVKGKIKQPEPKPKPPPQVPPAQD) are disordered. The 63-residue stretch at 54-116 (VKYPIYVGKY…PSNYVAEYKS (63 aa)) folds into the SH3 domain. Positions 122 to 214 (WFFGQVKRVD…GLCVNLKGPC (93 aa)) constitute an SH2 domain. Positions 240–493 (IKLLRGLGAG…TLSWQLEEFF (254 aa)) constitute a Protein kinase domain. ATP-binding positions include 246–254 (LGAGQFGEV) and lysine 268. The active-site Proton acceptor is the aspartate 359.

It belongs to the protein kinase superfamily. Tyr protein kinase family.

The protein resides in the cytoplasm. It carries out the reaction L-tyrosyl-[protein] + ATP = O-phospho-L-tyrosyl-[protein] + ADP + H(+). This is Tyrosine-protein kinase isoform SRK4 (SRK1) from Spongilla lacustris (Freshwater sponge).